The following is a 412-amino-acid chain: Serine hydroxymethyltransferase (412 aa).

(6S)-5,6,7,8-tetrahydrofolate-binding positions include L114 and 118-120; that span reads GHL. K223 is modified (N6-(pyridoxal phosphate)lysine).

It belongs to the SHMT family. In terms of assembly, homodimer. Pyridoxal 5'-phosphate is required as a cofactor.

It is found in the cytoplasm. It carries out the reaction (6R)-5,10-methylene-5,6,7,8-tetrahydrofolate + glycine + H2O = (6S)-5,6,7,8-tetrahydrofolate + L-serine. Its pathway is one-carbon metabolism; tetrahydrofolate interconversion. It functions in the pathway amino-acid biosynthesis; glycine biosynthesis; glycine from L-serine: step 1/1. In terms of biological role, catalyzes the reversible interconversion of serine and glycine with tetrahydrofolate (THF) serving as the one-carbon carrier. This reaction serves as the major source of one-carbon groups required for the biosynthesis of purines, thymidylate, methionine, and other important biomolecules. Also exhibits THF-independent aldolase activity toward beta-hydroxyamino acids, producing glycine and aldehydes, via a retro-aldol mechanism. In Mesoplasma florum (strain ATCC 33453 / NBRC 100688 / NCTC 11704 / L1) (Acholeplasma florum), this protein is Serine hydroxymethyltransferase.